Reading from the N-terminus, the 172-residue chain is Translation initiation factor IF-3 (172 aa).

Belongs to the IF-3 family. In terms of assembly, monomer.

Its subcellular location is the cytoplasm. In terms of biological role, IF-3 binds to the 30S ribosomal subunit and shifts the equilibrium between 70S ribosomes and their 50S and 30S subunits in favor of the free subunits, thus enhancing the availability of 30S subunits on which protein synthesis initiation begins. This Haemophilus influenzae (strain ATCC 51907 / DSM 11121 / KW20 / Rd) protein is Translation initiation factor IF-3.